The sequence spans 727 residues: Elongation factor 2 (727 aa).

The tr-type G domain maps to 19-260 (DQIRNMGICA…MSIKHLPNPL (242 aa)). Residues 28–35 (AHIDHGKT), 94–98 (DTPGH), and 148–151 (NKVD) each bind GTP. At histidine 603 the chain carries Diphthamide.

This sequence belongs to the TRAFAC class translation factor GTPase superfamily. Classic translation factor GTPase family. EF-G/EF-2 subfamily.

It is found in the cytoplasm. In terms of biological role, catalyzes the GTP-dependent ribosomal translocation step during translation elongation. During this step, the ribosome changes from the pre-translocational (PRE) to the post-translocational (POST) state as the newly formed A-site-bound peptidyl-tRNA and P-site-bound deacylated tRNA move to the P and E sites, respectively. Catalyzes the coordinated movement of the two tRNA molecules, the mRNA and conformational changes in the ribosome. This chain is Elongation factor 2, found in Methanococcus maripaludis (strain C5 / ATCC BAA-1333).